A 210-amino-acid chain; its full sequence is LexA repressor (210 aa).

The segment at residues 30 to 50 (RVEIAREIGFKSPNAAEEHLK) is a DNA-binding region (H-T-H motif). Residues serine 127 and lysine 164 each act as for autocatalytic cleavage activity in the active site.

It belongs to the peptidase S24 family. As to quaternary structure, homodimer.

The enzyme catalyses Hydrolysis of Ala-|-Gly bond in repressor LexA.. In terms of biological role, represses a number of genes involved in the response to DNA damage (SOS response), including recA and lexA. In the presence of single-stranded DNA, RecA interacts with LexA causing an autocatalytic cleavage which disrupts the DNA-binding part of LexA, leading to derepression of the SOS regulon and eventually DNA repair. The sequence is that of LexA repressor from Actinobacillus pleuropneumoniae serotype 5b (strain L20).